A 570-amino-acid chain; its full sequence is Methionine--tRNA ligase (570 aa).

A 'HIGH' region motif is present at residues 14 to 24; that stretch reads PYINGIKHLGN. C146, C149, C159, and C162 together coordinate Zn(2+). Positions 347-351 match the 'KMSKS' region motif; it reads QFSTS. T350 contributes to the ATP binding site.

Belongs to the class-I aminoacyl-tRNA synthetase family. MetG type 1 subfamily. In terms of assembly, monomer. Requires Zn(2+) as cofactor.

Its subcellular location is the cytoplasm. It carries out the reaction tRNA(Met) + L-methionine + ATP = L-methionyl-tRNA(Met) + AMP + diphosphate. In terms of biological role, is required not only for elongation of protein synthesis but also for the initiation of all mRNA translation through initiator tRNA(fMet) aminoacylation. The chain is Methionine--tRNA ligase from Jannaschia sp. (strain CCS1).